Reading from the N-terminus, the 321-residue chain is Queuosine 5'-phosphate N-glycosylase/hydrolase (321 aa).

The queuine site is built by phenylalanine 227, aspartate 229, and aspartate 296. The active-site Nucleophile or transition state stabilizer is the aspartate 229.

This sequence belongs to the QNG1 protein family.

It carries out the reaction queuosine 5'-phosphate + H2O = queuine + D-ribose 5-phosphate. Its function is as follows. Catalyzes the hydrolysis of queuosine 5'-phosphate, releasing the nucleobase queuine (q). Is required for salvage of queuine from exogenous queuosine (Q) that is imported and then converted to queuosine 5'-phosphate intracellularly. The protein is Queuosine 5'-phosphate N-glycosylase/hydrolase of Dictyostelium discoideum (Social amoeba).